The following is a 290-amino-acid chain: Acetyl-coenzyme A carboxylase carboxyl transferase subunit beta (290 aa).

The CoA carboxyltransferase N-terminal domain occupies 27-290 (LWHKCPSCEA…FTHSPSPVSA (264 aa)). Zn(2+)-binding residues include Cys-31, Cys-34, Cys-50, and Cys-53. The C4-type zinc-finger motif lies at 31–53 (CPSCEAVLYRPELEKTLDVCPKC).

Belongs to the AccD/PCCB family. In terms of assembly, acetyl-CoA carboxylase is a heterohexamer composed of biotin carboxyl carrier protein (AccB), biotin carboxylase (AccC) and two subunits each of ACCase subunit alpha (AccA) and ACCase subunit beta (AccD). The cofactor is Zn(2+).

Its subcellular location is the cytoplasm. It catalyses the reaction N(6)-carboxybiotinyl-L-lysyl-[protein] + acetyl-CoA = N(6)-biotinyl-L-lysyl-[protein] + malonyl-CoA. Its pathway is lipid metabolism; malonyl-CoA biosynthesis; malonyl-CoA from acetyl-CoA: step 1/1. Component of the acetyl coenzyme A carboxylase (ACC) complex. Biotin carboxylase (BC) catalyzes the carboxylation of biotin on its carrier protein (BCCP) and then the CO(2) group is transferred by the transcarboxylase to acetyl-CoA to form malonyl-CoA. This is Acetyl-coenzyme A carboxylase carboxyl transferase subunit beta from Pseudomonas paraeruginosa (strain DSM 24068 / PA7) (Pseudomonas aeruginosa (strain PA7)).